The primary structure comprises 551 residues: Glucans biosynthesis protein D (551 aa).

A signal peptide (tat-type signal) is located at residues 1-32 (MNRRRFIKASLALAAACGTPGLATLFSRNAWA).

It belongs to the OpgD/OpgG family. Predicted to be exported by the Tat system. The position of the signal peptide cleavage has not been experimentally proven.

The protein resides in the periplasm. Its pathway is glycan metabolism; osmoregulated periplasmic glucan (OPG) biosynthesis. Probably involved in the control of the structural glucose backbone of osmoregulated periplasmic glucans (OPGs). The sequence is that of Glucans biosynthesis protein D from Cronobacter sakazakii (strain ATCC BAA-894) (Enterobacter sakazakii).